The chain runs to 1259 residues: Trafficking protein particle complex II-specific subunit 130 homolog (1259 aa).

N-acetylalanine is present on Ala-2. Residues 479-526 (GNIPEMFDGRPSFTEGSGLEASPRTPSSLKVQAPPMSRTNSSPGNFES) form a disordered region.

The protein belongs to the TMEM1 family. As to quaternary structure, part of the multisubunit TRAPP (transport protein particle) II complex composed of BET3, BET5, TRS20, TRS23, TRS31, TRS33, TRS65, TRS85, TRS120 and TRS130.

It localises to the golgi apparatus. It is found in the trans-Golgi network. The protein localises to the early endosome. Its function is as follows. Specific subunit of the TRAPP II complex, a highly conserved vesicle tethering complex that is required for the proper transport of proteins in post-Golgi trafficking pathways to the growing cell plate in mitotic active cells. Required for the polarized and selective transport of PIN2, but not PIN1, to the plasma membrane. Not required for ER-to-Golgi as well as biosynthetic and endocytic vacuolar transport. This is Trafficking protein particle complex II-specific subunit 130 homolog from Arabidopsis thaliana (Mouse-ear cress).